The primary structure comprises 552 residues: Phosphoribosylaminoimidazole carboxylase (552 aa).

An ATP-grasp domain is found at 108-295; it reads KQHLQVFKIA…QFEAHLRAIC (188 aa). 134 to 189 serves as a coordination point for ATP; it reads GQEFGYPFVLKSKTLAYDGRGNYVVHQPSEIPTAIKALGDRPLYVEKFVPFSMEIA.

In the C-terminal section; belongs to the AIR carboxylase family. Class I subfamily.

The catalysed reaction is 5-amino-1-(5-phospho-D-ribosyl)imidazole-4-carboxylate + H(+) = 5-amino-1-(5-phospho-beta-D-ribosyl)imidazole + CO2. The protein operates within purine metabolism; IMP biosynthesis via de novo pathway; 5-amino-1-(5-phospho-D-ribosyl)imidazole-4-carboxylate from 5-amino-1-(5-phospho-D-ribosyl)imidazole (carboxylase route): step 1/1. The chain is Phosphoribosylaminoimidazole carboxylase (ade6) from Schizosaccharomyces pombe (strain 972 / ATCC 24843) (Fission yeast).